The chain runs to 194 residues: Small ribosomal subunit protein uS11m (194 aa).

This sequence belongs to the universal ribosomal protein uS11 family. As to quaternary structure, component of the mitochondrial small ribosomal subunit (mt-SSU). Mature mammalian 55S mitochondrial ribosomes consist of a small (28S) and a large (39S) subunit. The 28S small subunit contains a 12S ribosomal RNA (12S mt-rRNA) and 30 different proteins. The 39S large subunit contains a 16S rRNA (16S mt-rRNA), a copy of mitochondrial valine transfer RNA (mt-tRNA(Val)), which plays an integral structural role, and 52 different proteins.

It localises to the mitochondrion. The chain is Small ribosomal subunit protein uS11m (MRPS11) from Homo sapiens (Human).